We begin with the raw amino-acid sequence, 329 residues long: MCTGLALETKDGLHLFGRNMDIEYSFNQSIIFIPRNFKCVNKSNKKELTTKYAVLGMGTIFDDYPTFADGMNEKGLGCAGLNFPVYVSYSKEDIEGKTNIPVYNFLLWVLANFSSVEEVKEALKNANIVDIPISENIPNTTLHWMISDITGKSIVVEQTKEKLNVFDNNIGVLTNSPTFDWHVANLNQYVGLRYNQVPEFKLGDQSLTALGQGTGLVGLPGDFTPASRFIRVAFLRDAMIKNDKDSIDLIEFFHILNNVAMVRGSTRTVEEKSDLTQYTSCMCLEKGIYYYNTYENNQINAIDMNKENLDGNEIKTYKYNKTLSINHVN.

Catalysis depends on Cys2, which acts as the Nucleophile; acyl-thioester intermediate. Residues Cys2 and Arg18 each contribute to the deoxycholate site. Asn82 contributes to the taurine binding site.

This sequence belongs to the peptidase C59 family. As to quaternary structure, homotetramer. The tetramer consists of a dimer of dimers.

It catalyses the reaction glycocholate + H2O = cholate + glycine. It carries out the reaction cholate + taurine = taurocholate + H2O. The enzyme catalyses taurodeoxycholate + H2O = deoxycholate + taurine. The catalysed reaction is glycodeoxycholate + H2O = deoxycholate + glycine. It catalyses the reaction chenodeoxycholate + glycine = glycochenodeoxycholate + H2O. It carries out the reaction taurochenodeoxycholate + H2O = chenodeoxycholate + taurine. The enzyme catalyses an L-alpha-amino acid + cholate = an N-choloyl-L-alpha-amino acid + H2O. The catalysed reaction is an L-alpha-amino acid + taurocholate = an N-choloyl-L-alpha-amino acid + taurine. It catalyses the reaction glycocholate + an L-alpha-amino acid = an N-choloyl-L-alpha-amino acid + glycine. It carries out the reaction cholate + L-histidine = L-histidocholate + H2O. The enzyme catalyses taurocholate + L-histidine = L-histidocholate + taurine. The catalysed reaction is glycocholate + L-histidine = L-histidocholate + glycine. It catalyses the reaction cholate + L-arginine = L-arginocholate + H2O. It carries out the reaction taurocholate + L-arginine = L-arginocholate + taurine. The enzyme catalyses glycocholate + L-arginine = L-arginocholate + glycine. The catalysed reaction is cholate + L-phenylalanine = L-phenylalanocholate + H2O. It catalyses the reaction taurocholate + L-phenylalanine = L-phenylalanocholate + taurine. The protein operates within lipid metabolism; bile acid biosynthesis. Its function is as follows. Possesses dual functions in bile acid metabolism. Acts as a bile salt hydrolase that catalyzes the deconjugation of glycine- and taurine-linked bile salts, which occurs naturally in the intestines of humans, releasing amino acid residues and deconjugated bile salts (bile acids). Can hydrolyze the amide bond in major human conjugated bile salts, such as glycocholate (GCA), taurocholate (TCA) and taurodeoxycholate (TDCA). Shows a slight preference for taurine-conjugated bile acids as substrates. Also acts as an amine N-acyltransferase that conjugates a wide variety of amino acids to conjugated and non-conjugated bile acids, thus producing bacterial bile acid amidates (BBAAs) - also named microbially conjugated bile acids (MCBAs) - in the gastrointestinal tract. These BBAAs may facilitate communication between the microbiota and host through the activation of human ligand-activated transcription factors. This chain is Bile salt hydrolase/transferase (cbh), found in Clostridium perfringens (strain 13 / Type A).